A 494-amino-acid chain; its full sequence is MTDLTTLTIAQARDALKKRELKATELTEAYLKAIELANPILNTYVAITAEQAMKMAAKSDSRLAKGHGGILEGIPLGIKDLFATQDVHTQACSYILDGFKPHYESTVTANLWRDGAVMLGKLNMDEFAMGSSNETSYYGPVISPWRKKDSNEKLVPGGSSGGSAAAVAAGLCVGATATDTGGSIRQPAAFTGTVGIKPTYGRCSRWGTIAFASSLDQAGPIGRNVRDCAILLKSMASFDEKDSTSVNLPVPDYESYIGQSIKGMKIGIPKEYYLEGMSPEIVELWQKGINWLKEAGAEIKNISLPHTKYALPAYYIVAPAEASSNLARYDGVRFGLRIPGKDVIEMYENTRSVGFGNEVKRRILIGTYVLSSGYYDAYYLKAQKVRTLVKRDFDQCFSSGVDAILTPATPTPAFGIADEKIKNDTVAMYLNDIFTVPVNMAGLPGISVPSGLSSNGLPLGLQLIGKPFAEEVIFQIAHIIEQAAGMFSAEKWWT.

Residues Lys-79 and Ser-159 each act as charge relay system in the active site. Ser-183 acts as the Acyl-ester intermediate in catalysis.

The protein belongs to the amidase family. GatA subfamily. Heterotrimer of A, B and C subunits.

The catalysed reaction is L-glutamyl-tRNA(Gln) + L-glutamine + ATP + H2O = L-glutaminyl-tRNA(Gln) + L-glutamate + ADP + phosphate + H(+). Its function is as follows. Allows the formation of correctly charged Gln-tRNA(Gln) through the transamidation of misacylated Glu-tRNA(Gln) in organisms which lack glutaminyl-tRNA synthetase. The reaction takes place in the presence of glutamine and ATP through an activated gamma-phospho-Glu-tRNA(Gln). The sequence is that of Glutamyl-tRNA(Gln) amidotransferase subunit A from Bartonella henselae (strain ATCC 49882 / DSM 28221 / CCUG 30454 / Houston 1) (Rochalimaea henselae).